The primary structure comprises 117 residues: Ig heavy chain V region J558 (117 aa).

Positions 1–116 (EVQLQQSGPE…WGAGTTVTVS (116 aa)) constitute an Ig-like domain. A disulfide bridge connects residues C22 and C96.

The protein is Ig heavy chain V region J558 of Mus musculus (Mouse).